The sequence spans 250 residues: Ubiquinone/menaquinone biosynthesis C-methyltransferase UbiE (250 aa).

S-adenosyl-L-methionine contacts are provided by residues Thr-73, Asp-94, 122-123, and Ser-139; that span reads NA.

This sequence belongs to the class I-like SAM-binding methyltransferase superfamily. MenG/UbiE family.

It carries out the reaction a 2-demethylmenaquinol + S-adenosyl-L-methionine = a menaquinol + S-adenosyl-L-homocysteine + H(+). The catalysed reaction is a 2-methoxy-6-(all-trans-polyprenyl)benzene-1,4-diol + S-adenosyl-L-methionine = a 5-methoxy-2-methyl-3-(all-trans-polyprenyl)benzene-1,4-diol + S-adenosyl-L-homocysteine + H(+). Its pathway is quinol/quinone metabolism; menaquinone biosynthesis; menaquinol from 1,4-dihydroxy-2-naphthoate: step 2/2. The protein operates within cofactor biosynthesis; ubiquinone biosynthesis. Its function is as follows. Methyltransferase required for the conversion of demethylmenaquinol (DMKH2) to menaquinol (MKH2) and the conversion of 2-polyprenyl-6-methoxy-1,4-benzoquinol (DDMQH2) to 2-polyprenyl-3-methyl-6-methoxy-1,4-benzoquinol (DMQH2). The protein is Ubiquinone/menaquinone biosynthesis C-methyltransferase UbiE of Francisella tularensis subsp. tularensis (strain FSC 198).